The primary structure comprises 94 residues: Fungal defensin scedosporisin-2 (94 aa).

A signal peptide spans 1-25; sequence MKFSNISIAALFTILASTAMAAPAA. A propeptide spanning residues 26–56 is cleaved from the precursor; sequence DSPDSIVAREPAPVEETYEAPSGLEKRGFGC. 3 residues coordinate beta-D-GlcNAc-(1-&gt;4)-Mur2Ac(oyl-L-Ala-gamma-D-Glu-L-Lys-D-Ala-D-Ala)-di-trans,octa-cis-undecaprenyl diphosphate: phenylalanine 54, glycine 55, and cysteine 56. Disulfide bonds link cysteine 56/cysteine 78, cysteine 63/cysteine 91, and cysteine 67/cysteine 93. The interval 57–60 is interaction site with membrane interface; sequence PGSE. Histidine 66 contacts beta-D-GlcNAc-(1-&gt;4)-Mur2Ac(oyl-L-Ala-gamma-D-Glu-L-Lys-D-Ala-D-Ala)-di-trans,octa-cis-undecaprenyl diphosphate. The interaction site with membrane interface stretch occupies residues 83 to 90; that stretch reads IPFVGRPR. Cysteine 91 is a binding site for beta-D-GlcNAc-(1-&gt;4)-Mur2Ac(oyl-L-Ala-gamma-D-Glu-L-Lys-D-Ala-D-Ala)-di-trans,octa-cis-undecaprenyl diphosphate.

This sequence belongs to the invertebrate defensin family.

The protein localises to the secreted. It is found in the target cell membrane. Antibacterial peptide potently active against Gram-positive bacteria. May act by selectively inhibiting peptidoglycan biosynthesis through complex formation with the cell wall precursor lipid II (1:1 molar ratio) thus inhibiting cell wall synthesis. Shows remarkably activity against resistant isolates such as methicillin-resistant Staphylococcus aureus (MRSA) and vancomycin-resistant Enterococci (VRE) at the concentration of micromolar level. Does not act by destroying the membrane integrity, which is consistent with its nonamphiphilic architecture. Acts more rapidly than vancomycin. Shows low hemolysis and cytotoxicity and high serum stability. In vivo, is as efficient as vancomycin to protect mouse peritonitis models from MRSA infections. This Pseudallescheria apiosperma (Scedosporium apiospermum) protein is Fungal defensin scedosporisin-2.